Consider the following 362-residue polypeptide: Caveolae-associated protein 4 (362 aa).

Residues 1-24 (MEHNGSASNAGKIHQNRLSSVTED) are disordered. The stretch at 100–120 (IKDVKARVEKQQVRVTKVETK) forms a coiled coil. Serine 152, serine 171, and serine 172 each carry phosphoserine. 3 stretches are compositionally biased toward basic and acidic residues: residues 230–255 (RERL…ERFK), 275–289 (KAKD…VDRG), and 305–320 (HEFH…KEVT). Disordered regions lie at residues 230–289 (RERL…VDRG) and 305–346 (HEFH…KPQV). The residue at position 324 (tyrosine 324) is a Phosphotyrosine. Threonine 334 bears the Phosphothreonine mark. Serine 353 carries the post-translational modification Phosphoserine.

Belongs to the CAVIN family. Component of the CAVIN complex composed of CAVIN1, CAVIN2, CAVIN3 and CAVIN4. Interacts with CAVIN1. Interacts with CAVIN2; this augments the transactivation of NPPA. Interacts with CAV3, ADRA1A, ADRA1B, MAPK1 and MAPK3. In terms of tissue distribution, abundantly expressed in cardiac and skeletal muscle (at protein level). Weaker expression in aorta and lung. In heart, expressed in cardiomyocytes and vascular smooth muscle cells but not in other surrounding cells including vascular endothelial cells.

The protein localises to the cytoplasm. Its subcellular location is the myofibril. It is found in the sarcomere. It localises to the cytosol. The protein resides in the membrane. The protein localises to the caveola. Its subcellular location is the cell membrane. It is found in the sarcolemma. Functionally, modulates the morphology of formed caveolae in cardiomyocytes, but is not required for caveolar formation. Facilitates the recruitment of MAPK1/3 to caveolae within cardiomyocytes and regulates alpha-1 adrenergic receptor-induced hypertrophic responses in cardiomyocytes through MAPK1/3 activation. Contributes to proper membrane localization and stabilization of caveolin-3 (CAV3) in cardiomyocytes. Induces RHOA activation and activates NPPA transcription and myofibrillar organization through the Rho/ROCK signaling pathway. The protein is Caveolae-associated protein 4 (Cavin4) of Mus musculus (Mouse).